The primary structure comprises 384 residues: Ribosomal RNA small subunit methyltransferase H (384 aa).

Residues 99–101, aspartate 118, tyrosine 145, aspartate 169, and glutamine 176 contribute to the S-adenosyl-L-methionine site; that span reads GGH.

Belongs to the methyltransferase superfamily. RsmH family.

Its subcellular location is the cytoplasm. It catalyses the reaction cytidine(1402) in 16S rRNA + S-adenosyl-L-methionine = N(4)-methylcytidine(1402) in 16S rRNA + S-adenosyl-L-homocysteine + H(+). In terms of biological role, specifically methylates the N4 position of cytidine in position 1402 (C1402) of 16S rRNA. This chain is Ribosomal RNA small subunit methyltransferase H, found in Mycobacteroides abscessus (strain ATCC 19977 / DSM 44196 / CCUG 20993 / CIP 104536 / JCM 13569 / NCTC 13031 / TMC 1543 / L948) (Mycobacterium abscessus).